Reading from the N-terminus, the 1070-residue chain is MLRDGNEGMSTIPGFNQIQFEGFCRFMDQGLTEELYKFPKIEDTDQEIEFQLFVETYQLVEPLIKERDAVYESLTYSSEFYISAGLIWKTSRDMQEQTIFLGNIPLMNSLGTSIVNGIYRIVINQILQSPGIYYRSELDHNGISVYTGTIISDWGGRLELEIDKKARIWARVSRKQKISILVLSSAMGSNLREILENVCYPEIFLSFLTDKEKKKIGSKENAILEFYQQFACVGGDPVFSESLCKELQKKFFQQKCELGKIGRRNMNRRLRLDISQNNTFLLPRDILAAADHLIGMKFGMGTLDDMNHLKNKRIRSVADLIQDQLGLALVRLENMIRGTIGGALRHKLIPSPQNLVTSTPLTSTYESFFGLHPLSQVLDRTNPLTQIVHGRKLSYLGPGGLTGRTASFRIRDIHPSHYGRICPIDTSEGINVGLIGSLAIHAKIGRGGSLESPFYEISQRSKGARMLYLSPGKDEYYMVAAGNPLALNQGLQEEQVVPARYRQEFLTIAWEQVHLRSIFSFQYFSIGASLIPFIEHNDANRALMSSNMQRQAVPLSRSEKCIVGTGLERQAALDSGVLAIAEHEGKVIYTDTDKILLSGNGDTLNIPLVMYQRSNKNTCMHQKPQVQRGKYIKKGQILAYGAATIGGELALGKNVLVAYMPWEGYNFEDAVLISERLVYEDIYTSFHIRKYEIQTHVTSQGPERVTREIPHLEAHLLRNLDKNGIVMLGSWVETGEILVGKLTPQMVKESSYAPEDRLLRAILGIQVSTSKETCLKLPIGGRGRVIDVRWIQKRVGSSYNPETIRVYILQKREIKVGDKVAGRHGNKGIISKILPRQDMPYLQDGRPVDMVFNPLGVPSRMNVGQIFECSLGLAGGLLDRHYRIAPFDERYEQEASRKLVFSELYQASKQTATPWVFEPEYPGKSRIFDGRTGDPFEQPVIIGKPYILKLIHQVDDKIHGRSSGHYALVTQQPLRGRAKQGGQRVGEMEVWALEGFGVAYILQEMLTYKSDHIRARQEVLGTTIIGGAIPNPEDAPESFRLLVRELRSLALELNHFFVSEKTFKIKRKEA.

The protein belongs to the RNA polymerase beta chain family. In terms of assembly, in plastids the minimal PEP RNA polymerase catalytic core is composed of four subunits: alpha, beta, beta', and beta''. When a (nuclear-encoded) sigma factor is associated with the core the holoenzyme is formed, which can initiate transcription.

The protein resides in the plastid. It is found in the chloroplast. It catalyses the reaction RNA(n) + a ribonucleoside 5'-triphosphate = RNA(n+1) + diphosphate. Its function is as follows. DNA-dependent RNA polymerase catalyzes the transcription of DNA into RNA using the four ribonucleoside triphosphates as substrates. The chain is DNA-directed RNA polymerase subunit beta from Daucus carota (Wild carrot).